The chain runs to 433 residues: Alpha-(1,3)-fucosyltransferase 4 (433 aa).

Over 1-52 (MAPARQELQHESRCRPSRTVDAWRAAVATRGRHMETPGYRRRTRCGGWGLPR) the chain is Cytoplasmic. The helical; Signal-anchor for type II membrane protein transmembrane segment at 53-74 (SVSSLAAVGLLCTALTTFICWG) threads the bilayer. The Lumenal segment spans residues 75-433 (QLPPLPWASP…IHNLADWFQR (359 aa)). Residues Asn-117 and Asn-218 are each glycosylated (N-linked (GlcNAc...) asparagine).

It belongs to the glycosyltransferase 10 family. In terms of tissue distribution, highest expression in stomach and colon. It is also expressed in the lung, testis, uterus, small intestine and to a lesser extent in spleen, and ovary. Present in trace amounts in brain, thymus, heart, smooth muscle, kidney and bone marrow. Not found in liver, salivary gland and pancreas.

The protein resides in the golgi apparatus. Its subcellular location is the golgi stack membrane. The catalysed reaction is a beta-D-galactosyl-(1-&gt;4)-N-acetyl-beta-D-glucosaminyl derivative + GDP-beta-L-fucose = a beta-D-galactosyl-(1-&gt;4)-[alpha-L-fucosyl-(1-&gt;3)]-N-acetyl-beta-D-glucosaminyl derivative + GDP + H(+). The enzyme catalyses an N-acetyl-alpha-neuraminyl-(2-&gt;3)-beta-D-galactosyl-(1-&gt;4)-N-acetyl-beta-D-glucosaminyl derivative + GDP-beta-L-fucose = an alpha-Neu5Ac-(2-&gt;3)-beta-D-Gal-(1-&gt;4)-[alpha-L-Fuc-(1-&gt;3)]-beta-D-GlcNAc derivative + GDP + H(+). It catalyses the reaction an alpha-Neu5Ac-(2-&gt;3)-beta-D-Gal-(1-&gt;4)-beta-D-GlcNAc-(1-&gt;3)-beta-D-Gal-(1-&gt;4)-beta-D-GlcNAc derivative + GDP-beta-L-fucose = an alpha-Neu5Ac-(2-&gt;3)-beta-D-Gal-(1-&gt;4)-beta-D-GlcNAc-(1-&gt;3)-beta-D-Gal-(1-&gt;4)-[alpha-L-Fuc-(1-&gt;3)]-beta-D-GlcNAc derivative + GDP + H(+). It carries out the reaction an alpha-Neu5Ac-(2-&gt;3)-beta-D-Gal-(1-&gt;4)-beta-D-GlcNAc6S derivative + GDP-beta-L-fucose = an alpha-Neu5Ac-(2-&gt;3)-beta-D-Gal-(1-&gt;4)-[alpha-L-Fuc-(1-&gt;3)]-beta-D-GlcNAc6S derivative + GDP + H(+). It functions in the pathway protein modification; protein glycosylation. Catalyzes alpha(1-&gt;3) linkage of fucosyl moiety transferred from GDP-beta-L-fucose to N-acetyl glucosamine (GlcNAc) within type 2 lactosamine (LacNAc, Gal-beta(1-&gt;4)GlcNAc) glycan attached to N- or O-linked glycoproteins. Robustly fucosylates nonsialylated distal LacNAc unit of the polylactosamine chain to form Lewis X antigen (CD15), a glycan determinant known to mediate important cellular functions in development and immunity. Fucosylates with lower efficiency sialylated LacNAc acceptors to form sialyl Lewis X and 6-sulfo sialyl Lewis X determinants that serve as recognition epitopes for C-type lectins. Together with FUT7 contributes to SELE, SELL and SELP selectin ligand biosynthesis and selectin-dependent lymphocyte homing, leukocyte migration and blood leukocyte homeostasis. In a cell type specific manner, may also fucosylate the internal LacNAc unit of the polylactosamine chain to form VIM-2 antigen that serves as recognition epitope for SELE. In Mus musculus (Mouse), this protein is Alpha-(1,3)-fucosyltransferase 4 (Fut4).